The following is a 304-amino-acid chain: Glutaminase (304 aa).

Positions 63, 113, 157, 164, 188, 240, and 258 each coordinate substrate.

This sequence belongs to the glutaminase family. In terms of assembly, homotetramer.

It catalyses the reaction L-glutamine + H2O = L-glutamate + NH4(+). This chain is Glutaminase, found in Ralstonia nicotianae (strain ATCC BAA-1114 / GMI1000) (Ralstonia solanacearum).